We begin with the raw amino-acid sequence, 20 residues long: Peptidase T (20 aa).

Belongs to the peptidase M20B family. Zn(2+) is required as a cofactor. Co(2+) serves as cofactor.

The protein localises to the cell envelope. The catalysed reaction is Release of the N-terminal residue from a tripeptide.. Inhibited by the chelating agents EDTA and 1,10-phenanthroline, by bestatin and amastatin, p-hydroxymercuribenzoate and some divalent cations at high concentration. Cleaves a wide range of dipeptides and tripeptides, but does not display activity against larger peptides. May have a role in the survival of F.nucleatum in the subgingival environment of the mouth. The sequence is that of Peptidase T (pepT) from Fusobacterium nucleatum subsp. polymorphum (Fusobacterium polymorphum).